Here is a 266-residue protein sequence, read N- to C-terminus: uncharacterized protein (266 aa).

Disordered regions lie at residues 50-116 (GGSR…DFAD) and 128-224 (EEER…PTSG). Residues 78–90 (APDPPAGNQPPAL) show a composition bias toward pro residues. Over residues 94-108 (GDGGNESGAGGGESG) the composition is skewed to gly residues. Over residues 129-161 (EERRLQYPRETTKRTETVDERKRERSRSPRRDA) the composition is skewed to basic and acidic residues. Positions 166 to 176 (PRAAPAAAPRA) are enriched in low complexity.

This is an uncharacterized protein from Homo sapiens (Human).